Reading from the N-terminus, the 255-residue chain is MEKKVSHVIDFLSNDEVQRQLGDPSISGISFSFDIRTLLKKHSGGNPQFFNYSMRDSFHEWCADIELGANTNELVTELLWDIIYLTEHQFLLPYYHGEHKKFQKKLVKRVGNHLNSLVNNSASKPTGSMTVNVRHVWRNVGDRYTLLYLPLYFKELIWCKANGSIFHVIIPHTKEHVIHEHKEWLLAILEMAGYWNLSHVRLYLPRDDLTNIQTLLKNLHWIGANLLPNENRNECNENDDITLSDETYIILECEC.

Belongs to the ODC antizyme family. Interacts with ODC and thereby sterically blocks ODC homodimerization.

In terms of biological role, ornithine decarboxylase (ODC) antizyme protein that negatively regulates ODC activity and intracellular polyamine biosynthesis in response to increased intracellular polyamine levels. Binds to ODC monomers, inhibiting the assembly of the functional ODC homodimer, and targets the monomers for ubiquitin-independent proteolytic destruction by the 26S proteasome. The sequence is that of Ornithine decarboxylase antizyme (OAZ1) from Candida glabrata (strain ATCC 2001 / BCRC 20586 / JCM 3761 / NBRC 0622 / NRRL Y-65 / CBS 138) (Yeast).